The chain runs to 270 residues: Energy-coupling factor transporter transmembrane protein EcfT (270 aa).

4 helical membrane passes run 36 to 56 (LFIV…LISI), 72 to 92 (PIFI…GGAN), 108 to 128 (LIMA…TSLL), and 248 to 268 (FIAS…RIWW).

This sequence belongs to the energy-coupling factor EcfT family. In terms of assembly, forms a stable energy-coupling factor (ECF) transporter complex composed of 2 membrane-embedded substrate-binding proteins (S component), 2 ATP-binding proteins (A component) and 2 transmembrane proteins (T component). May be able to interact with more than 1 S component at a time.

It localises to the cell membrane. Its function is as follows. Transmembrane (T) component of an energy-coupling factor (ECF) ABC-transporter complex. Unlike classic ABC transporters this ECF transporter provides the energy necessary to transport a number of different substrates. The sequence is that of Energy-coupling factor transporter transmembrane protein EcfT from Clostridium kluyveri (strain ATCC 8527 / DSM 555 / NBRC 12016 / NCIMB 10680 / K1).